Consider the following 382-residue polypeptide: Tuliposide A-converting enzyme 2, chloroplastic (382 aa).

A chloroplast-targeting transit peptide spans 1-74; it reads MSVASFFSSL…PSPSLSPTPT (74 aa). S232 acts as the Acyl-ester intermediate in catalysis. Catalysis depends on charge relay system residues D324 and H356.

It belongs to the AB hydrolase superfamily. As to quaternary structure, homodimer. In terms of tissue distribution, expressed in roots, stems, leaves, petals, stamens and pistils, but not in bulb scales.

The protein resides in the plastid. It is found in the chloroplast. It carries out the reaction 6-tuliposide A = tulipalin A + D-glucose. With respect to regulation, inhibited by NaF, AgNO(3), HgCl(2), CuSO(4) and phenylmethylsulfonyl fluoride (PMSF). Its function is as follows. Lactone-forming carboxylesterases, specifically catalyzing intramolecular transesterification, but not hydrolysis. Involved in the biosynthesis of tulipalins, defensive chemicals that show antimicrobial activities against a broad range of strains of bacteria and fungi. Substrates are 6-tuliposide A &gt; 6-tuliposide B. This Tulipa gesneriana (Garden tulip) protein is Tuliposide A-converting enzyme 2, chloroplastic (TCEA2).